A 376-amino-acid polypeptide reads, in one-letter code: Alanine racemase (376 aa).

Catalysis depends on K36, which acts as the Proton acceptor; specific for D-alanine. K36 carries the post-translational modification N6-(pyridoxal phosphate)lysine. R134 contacts substrate. Y266 functions as the Proton acceptor; specific for L-alanine in the catalytic mechanism. Substrate is bound at residue M314.

This sequence belongs to the alanine racemase family. Pyridoxal 5'-phosphate serves as cofactor.

The catalysed reaction is L-alanine = D-alanine. Its pathway is amino-acid biosynthesis; D-alanine biosynthesis; D-alanine from L-alanine: step 1/1. Its function is as follows. Catalyzes the interconversion of L-alanine and D-alanine. May also act on other amino acids. The polypeptide is Alanine racemase (alr) (Nitratidesulfovibrio vulgaris (strain DP4) (Desulfovibrio vulgaris)).